We begin with the raw amino-acid sequence, 138 residues long: UPF0355 protein SSP2326 (138 aa).

The disordered stretch occupies residues 115–138; that stretch reads NVAFETNQTKSNSHYSEETNGPKS. A compositionally biased stretch (polar residues) spans 118–138; sequence FETNQTKSNSHYSEETNGPKS.

It belongs to the UPF0355 family.

This is UPF0355 protein SSP2326 from Staphylococcus saprophyticus subsp. saprophyticus (strain ATCC 15305 / DSM 20229 / NCIMB 8711 / NCTC 7292 / S-41).